We begin with the raw amino-acid sequence, 470 residues long: ATP synthase subunit beta (470 aa).

157–164 (GGAGVGKT) serves as a coordination point for ATP.

This sequence belongs to the ATPase alpha/beta chains family. In terms of assembly, F-type ATPases have 2 components, CF(1) - the catalytic core - and CF(0) - the membrane proton channel. CF(1) has five subunits: alpha(3), beta(3), gamma(1), delta(1), epsilon(1). CF(0) has three main subunits: a(1), b(2) and c(9-12). The alpha and beta chains form an alternating ring which encloses part of the gamma chain. CF(1) is attached to CF(0) by a central stalk formed by the gamma and epsilon chains, while a peripheral stalk is formed by the delta and b chains.

The protein localises to the cell membrane. It catalyses the reaction ATP + H2O + 4 H(+)(in) = ADP + phosphate + 5 H(+)(out). Functionally, produces ATP from ADP in the presence of a proton gradient across the membrane. The catalytic sites are hosted primarily by the beta subunits. The sequence is that of ATP synthase subunit beta from Pelotomaculum thermopropionicum (strain DSM 13744 / JCM 10971 / SI).